A 264-amino-acid chain; its full sequence is Hemin import ATP-binding protein HmuV (264 aa).

The 237-residue stretch at 10-246 (LQAQNLSYSI…HTLRKWYQAD (237 aa)) folds into the ABC transporter domain. Residue 42 to 49 (GPNGAGKS) participates in ATP binding.

It belongs to the ABC transporter superfamily. Heme (hemin) importer (TC 3.A.1.14.5) family. In terms of assembly, the complex is composed of two ATP-binding proteins (HmuV), two transmembrane proteins (HmuU) and a solute-binding protein (HmuT).

The protein resides in the cell inner membrane. In terms of biological role, part of the ABC transporter complex HmuTUV involved in hemin import. Responsible for energy coupling to the transport system. The protein is Hemin import ATP-binding protein HmuV of Photorhabdus laumondii subsp. laumondii (strain DSM 15139 / CIP 105565 / TT01) (Photorhabdus luminescens subsp. laumondii).